A 379-amino-acid chain; its full sequence is UDP-4-amino-4-deoxy-L-arabinose--oxoglutarate aminotransferase (379 aa).

Position 182 is an N6-(pyridoxal phosphate)lysine (lysine 182).

It belongs to the DegT/DnrJ/EryC1 family. ArnB subfamily. As to quaternary structure, homodimer. Pyridoxal 5'-phosphate is required as a cofactor.

It catalyses the reaction UDP-4-amino-4-deoxy-beta-L-arabinose + 2-oxoglutarate = UDP-beta-L-threo-pentopyranos-4-ulose + L-glutamate. Its pathway is nucleotide-sugar biosynthesis; UDP-4-deoxy-4-formamido-beta-L-arabinose biosynthesis; UDP-4-deoxy-4-formamido-beta-L-arabinose from UDP-alpha-D-glucuronate: step 2/3. It participates in bacterial outer membrane biogenesis; lipopolysaccharide biosynthesis. In terms of biological role, catalyzes the conversion of UDP-4-keto-arabinose (UDP-Ara4O) to UDP-4-amino-4-deoxy-L-arabinose (UDP-L-Ara4N). The modified arabinose is attached to lipid A and is required for resistance to polymyxin and cationic antimicrobial peptides. This Shigella boydii serotype 4 (strain Sb227) protein is UDP-4-amino-4-deoxy-L-arabinose--oxoglutarate aminotransferase.